A 31-amino-acid polypeptide reads, in one-letter code: Photosystem I reaction center subunit XII (31 aa).

The chain crosses the membrane as a helical span at residues 7–26 (QIFIALLTALIPAFFALKLG).

This sequence belongs to the PsaM family.

Its subcellular location is the plastid. The protein resides in the chloroplast thylakoid membrane. The chain is Photosystem I reaction center subunit XII from Euglena granulata.